The sequence spans 337 residues: Aspartate carbamoyltransferase catalytic subunit (337 aa).

2 residues coordinate carbamoyl phosphate: R59 and T60. L-aspartate is bound at residue K87. Carbamoyl phosphate-binding residues include R109, H142, and Q145. Residues R182 and R253 each contribute to the L-aspartate site. Residues G294 and P295 each coordinate carbamoyl phosphate.

This sequence belongs to the aspartate/ornithine carbamoyltransferase superfamily. ATCase family. In terms of assembly, heterododecamer (2C3:3R2) of six catalytic PyrB chains organized as two trimers (C3), and six regulatory PyrI chains organized as three dimers (R2).

It catalyses the reaction carbamoyl phosphate + L-aspartate = N-carbamoyl-L-aspartate + phosphate + H(+). It functions in the pathway pyrimidine metabolism; UMP biosynthesis via de novo pathway; (S)-dihydroorotate from bicarbonate: step 2/3. Functionally, catalyzes the condensation of carbamoyl phosphate and aspartate to form carbamoyl aspartate and inorganic phosphate, the committed step in the de novo pyrimidine nucleotide biosynthesis pathway. The sequence is that of Aspartate carbamoyltransferase catalytic subunit from Prochlorococcus marinus (strain MIT 9211).